Consider the following 780-residue polypeptide: Gelsolin (780 aa).

At Met1 the chain carries N-acetylmethionine; alternate. A signal peptide spans 1 to 25 (MAPYRSSLLCALLLLALCALSPSHA). The tract at residues 51–174 (VVEHPEFLKA…YKKGGVASGF (124 aa)) is actin-severing. A Gelsolin-like 1 repeat occupies 74-155 (FDLVPVPPNL…EVQGFESSTF (82 aa)). Tyr84 is modified (phosphotyrosine). Residues Gly90, Asp91, Glu122, Asp134, Gly139, and Ala141 each coordinate Ca(2+). The interval 121–124 (DESG) is actin-actin interfilament contact point. An a 1,2-diacyl-sn-glycero-3-phospho-(1D-myo-inositol-4,5-bisphosphate)-binding site is contributed by 160-167 (KSGLKYKK). Val170 contacts Ca(2+). 186–194 (RLFQVKGRR) contributes to the a 1,2-diacyl-sn-glycero-3-phospho-(1D-myo-inositol-4,5-bisphosphate) binding site. Residues 196-268 (VRATEVPVSW…SEEGGEPEAM (73 aa)) form a Gelsolin-like 2 repeat. Gly211 and Asp212 together coordinate Ca(2+). A disulfide bridge links Cys213 with Cys226. Residue Glu234 participates in Ca(2+) binding. The segment at 244–269 (GIRDNERSGRAQVHVSEEGGEPEAML) is disordered. Ca(2+) contacts are provided by Asp284, Glu327, Asp328, and Glu352. Residues 315-387 (DENPFAQGAL…LPEGGETPLF (73 aa)) form a Gelsolin-like 3 repeat. Phosphotyrosine occurs at positions 407 and 463. The tract at residues 432 to 780 (AAQHGMDDDG…LDRALAELAA (349 aa)) is actin-binding, Ca-sensitive. Residues 453-534 (SNKVPVDPAT…VQGKEPAHLM (82 aa)) form a Gelsolin-like 4 repeat. Gly469, Asp470, Glu500, Asp512, Gly517, Pro519, and Thr549 together coordinate Ca(2+). One copy of the Gelsolin-like 5 repeat lies at 575–640 (RAVEVMPKSG…EEGSEPDAFW (66 aa)). N6-acetyllysine is present on Lys582. Ca(2+) is bound by residues Asn589 and Asp590. Phosphotyrosine is present on Tyr601. Position 612 (Glu612) interacts with Ca(2+). Tyr649 is subject to Phosphotyrosine. A Gelsolin-like 6 repeat occupies 679–754 (IEEVPGELMQ…VRQGFEPPSF (76 aa)). Residues Asp694, Asp695, and Glu717 each contribute to the Ca(2+) site. Phosphothreonine is present on Thr740.

This sequence belongs to the villin/gelsolin family. As to quaternary structure, binds to actin and to fibronectin. Identified in a complex composed of ACTA1, COBL, GSN and TMSB4X. Interacts with the inactive form of EIF2AK2/PKR. Interacts with FLII. Phosphorylated on tyrosine residues in vitro.

It localises to the cytoplasm. The protein resides in the cytoskeleton. Its subcellular location is the secreted. Its function is as follows. Calcium-regulated, actin-modulating protein that binds to the plus (or barbed) ends of actin monomers or filaments, preventing monomer exchange (end-blocking or capping). It can promote the assembly of monomers into filaments (nucleation) as well as sever filaments already formed. Plays a role in ciliogenesis. In Mus musculus (Mouse), this protein is Gelsolin (Gsn).